A 145-amino-acid chain; its full sequence is Ribosomal RNA large subunit methyltransferase H (145 aa).

Residues Leu64, Gly93, and 112 to 117 (LSPLTF) contribute to the S-adenosyl-L-methionine site.

This sequence belongs to the RNA methyltransferase RlmH family. In terms of assembly, homodimer.

Its subcellular location is the cytoplasm. The catalysed reaction is pseudouridine(1915) in 23S rRNA + S-adenosyl-L-methionine = N(3)-methylpseudouridine(1915) in 23S rRNA + S-adenosyl-L-homocysteine + H(+). Functionally, specifically methylates the pseudouridine at position 1915 (m3Psi1915) in 23S rRNA. The protein is Ribosomal RNA large subunit methyltransferase H of Prochlorococcus marinus (strain NATL2A).